A 316-amino-acid polypeptide reads, in one-letter code: CD276 antigen (316 aa).

The N-terminal stretch at 1–28 (MLRGWGGPSVGVCVRTALGVLCLCLTGA) is a signal peptide. In terms of domain architecture, Ig-like V-type spans 29-139 (VEVQVSEDPV…DSAAVSLQVA (111 aa)). Topologically, residues 29-248 (VEVQVSEDPV…GQPLTFPPEA (220 aa)) are extracellular. N-linked (GlcNAc...) asparagine glycans are attached at residues N104, N189, and N215. The Ig-like C2-type domain occupies 145-238 (PSMTLEPNKD…QDAHGSVTIT (94 aa)). The cysteines at positions 165 and 220 are disulfide-linked. The chain crosses the membrane as a helical span at residues 249–269 (LWVTVGLSVCLVVLLVALAFV). Topologically, residues 270–316 (CWRKIKQSCEEENAGAEDQDGDGEGSKTALRPLKPSENKEDDGQEIA) are cytoplasmic. Over residues 280–292 (EENAGAEDQDGDG) the composition is skewed to acidic residues. A disordered region spans residues 280-316 (EENAGAEDQDGDGEGSKTALRPLKPSENKEDDGQEIA).

The protein belongs to the immunoglobulin superfamily. BTN/MOG family. Interacts with TREML2 and this interaction enhances T-cell activation. In terms of tissue distribution, ubiquitous.

Its subcellular location is the membrane. In terms of biological role, modulates T-cell-mediated immune responses and the development of acute and chronic transplant rejection. Plays a positive regulatory role in bone formation and has a dual role in the bone-immune interface. Induces antitumor immunity as it activates both acquired and innate immunity leading to natural killer cell and CD8 T-cell dependent killing of tumor cells. The sequence is that of CD276 antigen (Cd276) from Mus musculus (Mouse).